Reading from the N-terminus, the 464-residue chain is MKTTLVKSLYRNTKDYVGKEIVVAGWVRTVRDSKAFGFIELNDGSFFKNLQIVFEEKNLPNFKEIAKLSVGSAIIAHGELVETPGAKQPFELKATKIEIEGASTPDYPLQKKRHSFEYLRTIAHLRPRTNTFSAVFRVRSLLAYAIHKFFQERGFVYVHTPIITGSDAEGAGQMFKVTTLDINNPPRKEDGTVDFSKDFFDRETNLTVSGQLEGETYSMAFRNIYTFGPTFRAENSNTARHAAEFWMVEPEIAFADLEDDMELAEDMLKYIINYCLENAPEEMEFFNNFIDNTLLDRLNNIVSSDFAHVTYTEAIDILSKADQKFEYPVKWGNDLQTEHERYLTEKVFKKPVFVTDYPKDIKAFYMRLNDDNKTVAAMDLLVPGVGEIIGGSQREERLDYLENRMKELGLKMEDYWWYLDLRRYGSTRHAGFGLGFERAIMYITGMSNIRDVIPFPRTVHSAEF.

It belongs to the class-II aminoacyl-tRNA synthetase family. As to quaternary structure, homodimer.

Its subcellular location is the cytoplasm. The catalysed reaction is tRNA(Asn) + L-asparagine + ATP = L-asparaginyl-tRNA(Asn) + AMP + diphosphate + H(+). The protein is Asparagine--tRNA ligase of Acetivibrio thermocellus (strain ATCC 27405 / DSM 1237 / JCM 9322 / NBRC 103400 / NCIMB 10682 / NRRL B-4536 / VPI 7372) (Clostridium thermocellum).